We begin with the raw amino-acid sequence, 330 residues long: uncharacterized protein (330 aa).

10 consecutive transmembrane segments (helical) span residues 15 to 35 (LTLIAPFFLWGTAMVAMKGVL), 41 to 61 (FFVATVRLIPAGILVLLWAMG), 72 to 92 (GWGWIILFALVDGTLFQGFLA), 102 to 122 (LGSVIIDSQPIAVALLSSWLF), 125 to 145 (VIGGIGWLGLLLGVGGISLIG), 175 to 195 (LWMLLASLSMAVGTVLIPFVS), 201 to 221 (VVATGWHMIIGGLPLLAIALV), 238 to 258 (LAYATVFGSAIAYGIFFYLAS), 264 to 284 (SLSSLTFLTPIFALSFSNLIL), and 286 to 306 (EQLSSLQWLGVAFTLVSIYLI). 2 EamA domains span residues 22-146 (FLWG…LIGL) and 182-308 (LSMA…LINQ).

The protein belongs to the EamA transporter family.

The protein localises to the cell membrane. This is an uncharacterized protein from Synechocystis sp. (strain ATCC 27184 / PCC 6803 / Kazusa).